The sequence spans 624 residues: Phosphatidylserine decarboxylase proenzyme 2 (624 aa).

Residues 1–30 are disordered; that stretch reads MGHSPSRHNACGGGGGDGESPPSPLPSRFE. Positions 16–129 constitute a C2 domain; that stretch reads GDGESPPSPL…KDLDEHSEVL (114 aa). EF-hand domains lie at 156 to 191 and 192 to 227; these read TEQS…FGNK and LAVA…QQEK. Aspartate 169, asparagine 171, aspartate 173, glutamate 175, glutamate 180, aspartate 205, asparagine 207, aspartate 209, and glutamate 216 together coordinate Ca(2+). Residues aspartate 425, histidine 481, and serine 569 each act as charge relay system; for autoendoproteolytic cleavage activity in the active site. Serine 569 acts as the Schiff-base intermediate with substrate; via pyruvic acid; for decarboxylase activity in catalysis. Serine 569 carries the pyruvic acid (Ser); by autocatalysis modification.

Belongs to the phosphatidylserine decarboxylase family. PSD-B subfamily. Eukaryotic type II sub-subfamily. In terms of assembly, heterodimer of a large membrane-associated beta subunit and a small pyruvoyl-containing alpha subunit. Pyruvate serves as cofactor. Is synthesized initially as an inactive proenzyme. Formation of the active enzyme involves a self-maturation process in which the active site pyruvoyl group is generated from an internal serine residue via an autocatalytic post-translational modification. Two non-identical subunits are generated from the proenzyme in this reaction, and the pyruvate is formed at the N-terminus of the alpha chain, which is derived from the carboxyl end of the proenzyme. The autoendoproteolytic cleavage occurs by a canonical serine protease mechanism, in which the side chain hydroxyl group of the serine supplies its oxygen atom to form the C-terminus of the beta chain, while the remainder of the serine residue undergoes an oxidative deamination to produce ammonia and the pyruvoyl prosthetic group on the alpha chain. During this reaction, the Ser that is part of the protease active site of the proenzyme becomes the pyruvoyl prosthetic group, which constitutes an essential element of the active site of the mature decarboxylase.

It is found in the vacuole membrane. The protein localises to the endoplasmic reticulum membrane. It carries out the reaction a 1,2-diacyl-sn-glycero-3-phospho-L-serine + H(+) = a 1,2-diacyl-sn-glycero-3-phosphoethanolamine + CO2. The protein operates within phospholipid metabolism; phosphatidylethanolamine biosynthesis; phosphatidylethanolamine from CDP-diacylglycerol: step 2/2. In terms of biological role, catalyzes the formation of phosphatidylethanolamine (PtdEtn) from phosphatidylserine (PtdSer). Plays a central role in phospholipid metabolism and in the interorganelle trafficking of phosphatidylserine. The protein is Phosphatidylserine decarboxylase proenzyme 2 of Oryza sativa subsp. japonica (Rice).